The primary structure comprises 238 residues: Glycerol-3-phosphate acyltransferase (238 aa).

6 helical membrane passes run 5 to 25 (VIFG…SINF), 61 to 81 (FLVF…SAIL), 88 to 108 (FGAV…VFPI), 125 to 145 (IASL…AMIF), 149 to 169 (IVSL…IIPW), and 194 to 214 (AWYL…FTHI).

It belongs to the PlsY family. Probably interacts with PlsX.

It localises to the cell membrane. It carries out the reaction an acyl phosphate + sn-glycerol 3-phosphate = a 1-acyl-sn-glycero-3-phosphate + phosphate. It participates in lipid metabolism; phospholipid metabolism. Its function is as follows. Catalyzes the transfer of an acyl group from acyl-phosphate (acyl-PO(4)) to glycerol-3-phosphate (G3P) to form lysophosphatidic acid (LPA). This enzyme utilizes acyl-phosphate as fatty acyl donor, but not acyl-CoA or acyl-ACP. The protein is Glycerol-3-phosphate acyltransferase of Mycoplasma mobile (strain ATCC 43663 / 163K / NCTC 11711) (Mesomycoplasma mobile).